A 280-amino-acid chain; its full sequence is Secreted RxLR effector protein 39 (280 aa).

The first 19 residues, 1–19 (MRGAYYVAIALLIVASCSA), serve as a signal peptide directing secretion. Positions 49–70 (RVLRGSRDLKNKWAVHAGGEDR) match the RxLR-dEER motif. The interval 229-249 (EVKARSSKRQRTNPMLNNMDG) is disordered.

It belongs to the RxLR effector family.

Its subcellular location is the secreted. The protein localises to the host nucleus. In terms of biological role, secreted effector that completely suppresses the host cell death induced by cell death-inducing proteins. The chain is Secreted RxLR effector protein 39 from Plasmopara viticola (Downy mildew of grapevine).